Here is a 442-residue protein sequence, read N- to C-terminus: Ribosomal protein uS12 methylthiotransferase RimO (442 aa).

Positions 8–118 (PKVGFVSLGC…VLGHVHKYVE (111 aa)) constitute an MTTase N-terminal domain. [4Fe-4S] cluster contacts are provided by cysteine 17, cysteine 53, cysteine 82, cysteine 150, cysteine 154, and cysteine 157. Positions 136-373 (LTPRHYAYLK…MELQQQVSIR (238 aa)) constitute a Radical SAM core domain. The TRAM domain occupies 376–442 (ARKVGKEMLV…EYDLWASLID (67 aa)).

This sequence belongs to the methylthiotransferase family. RimO subfamily. It depends on [4Fe-4S] cluster as a cofactor.

Its subcellular location is the cytoplasm. It carries out the reaction L-aspartate(89)-[ribosomal protein uS12]-hydrogen + (sulfur carrier)-SH + AH2 + 2 S-adenosyl-L-methionine = 3-methylsulfanyl-L-aspartate(89)-[ribosomal protein uS12]-hydrogen + (sulfur carrier)-H + 5'-deoxyadenosine + L-methionine + A + S-adenosyl-L-homocysteine + 2 H(+). Its function is as follows. Catalyzes the methylthiolation of an aspartic acid residue of ribosomal protein uS12. In Aeromonas hydrophila subsp. hydrophila (strain ATCC 7966 / DSM 30187 / BCRC 13018 / CCUG 14551 / JCM 1027 / KCTC 2358 / NCIMB 9240 / NCTC 8049), this protein is Ribosomal protein uS12 methylthiotransferase RimO.